A 422-amino-acid chain; its full sequence is Probable D-serine dehydratase (422 aa).

Lys-105 bears the N6-(pyridoxal phosphate)lysine mark.

It belongs to the serine/threonine dehydratase family. DsdA subfamily. It depends on pyridoxal 5'-phosphate as a cofactor.

It carries out the reaction D-serine = pyruvate + NH4(+). This is Probable D-serine dehydratase from Carboxydothermus hydrogenoformans (strain ATCC BAA-161 / DSM 6008 / Z-2901).